Reading from the N-terminus, the 43-residue chain is Methionine aminopeptidase (43 aa).

It belongs to the peptidase M24A family. Methionine aminopeptidase type 1 subfamily. In terms of assembly, monomer. It depends on Co(2+) as a cofactor. Requires Zn(2+) as cofactor. Mn(2+) serves as cofactor. Fe(2+) is required as a cofactor.

The catalysed reaction is Release of N-terminal amino acids, preferentially methionine, from peptides and arylamides.. In terms of biological role, removes the N-terminal methionine from nascent proteins. The N-terminal methionine is often cleaved when the second residue in the primary sequence is small and uncharged (Met-Ala-, Cys, Gly, Pro, Ser, Thr, or Val). Requires deformylation of the N(alpha)-formylated initiator methionine before it can be hydrolyzed. The chain is Methionine aminopeptidase (map) from Klebsiella oxytoca.